Consider the following 334-residue polypeptide: Protein-methionine-sulfoxide reductase catalytic subunit MsrP (334 aa).

A signal peptide (tat-type signal) is located at residues 1-44; the sequence is MKKIRKLTEADVTAESAFFMQRRQVLKALGISAAALSLPNAAHA. Residues asparagine 88, 91-92, cysteine 146, threonine 181, asparagine 233, arginine 238, and 249-251 each bind Mo-molybdopterin; these read YE and GIK.

Belongs to the MsrP family. As to quaternary structure, heterodimer of a catalytic subunit (MsrP) and a heme-binding subunit (MsrQ). The cofactor is Mo-molybdopterin. In terms of processing, predicted to be exported by the Tat system. The position of the signal peptide cleavage has not been experimentally proven.

It is found in the periplasm. The catalysed reaction is L-methionyl-[protein] + a quinone + H2O = L-methionyl-(S)-S-oxide-[protein] + a quinol. It carries out the reaction L-methionyl-[protein] + a quinone + H2O = L-methionyl-(R)-S-oxide-[protein] + a quinol. Functionally, part of the MsrPQ system that repairs oxidized periplasmic proteins containing methionine sulfoxide residues (Met-O), using respiratory chain electrons. Thus protects these proteins from oxidative-stress damage caused by reactive species of oxygen and chlorine generated by the host defense mechanisms. MsrPQ is essential for the maintenance of envelope integrity under bleach stress, rescuing a wide series of structurally unrelated periplasmic proteins from methionine oxidation, including the primary periplasmic chaperone SurA and the lipoprotein Pal. The catalytic subunit MsrP is non-stereospecific, being able to reduce both (R-) and (S-) diastereoisomers of methionine sulfoxide. In Escherichia fergusonii (strain ATCC 35469 / DSM 13698 / CCUG 18766 / IAM 14443 / JCM 21226 / LMG 7866 / NBRC 102419 / NCTC 12128 / CDC 0568-73), this protein is Protein-methionine-sulfoxide reductase catalytic subunit MsrP.